We begin with the raw amino-acid sequence, 829 residues long: Colorectal mutant cancer protein (829 aa).

Disordered regions lie at residues 114–139, 282–320, and 672–700; these read RSEL…TSVS, TRLQ…SSND, and EEQK…CADA. The span at 123 to 132 shows a compositional bias: basic and acidic residues; it reads EVNEDSRSMD. The segment covering 285–312 has biased composition (polar residues); it reads QSVQATGPSSPGRLTSTNRPINPSTGEL. Positions 689-698 are enriched in basic and acidic residues; sequence SKDKPGKECA. A Nuclear localization signal motif is present at residues 766 to 782; the sequence is KRANSNLVAAYEKAKKK. The short motif at 826 to 829 is the PDZ-binding element; it reads ETSL. At Ser-828 the chain carries Phosphoserine.

This sequence belongs to the MCC family. As to quaternary structure, interacts with SCRIB (via phosphorylated PDZ-binding motif), EZR, SNX27, NHERF1 and NHERF2. Interacts with CTNNB1; the interaction is enhanced upon Wnt stimulation. Interacts with MYH10. Interacts with CCAR2. Expressed in a variety of tissues.

The protein resides in the cell membrane. Its subcellular location is the cell projection. It localises to the lamellipodium. The protein localises to the nucleus. It is found in the cytoplasm. In terms of biological role, candidate for the putative colorectal tumor suppressor gene located at 5q21. Suppresses cell proliferation and the Wnt/b-catenin pathway in colorectal cancer cells. Inhibits DNA binding of b-catenin/TCF/LEF transcription factors. Involved in cell migration independently of RAC1, CDC42 and p21-activated kinase (PAK) activation. Represses the beta-catenin pathway (canonical Wnt signaling pathway) in a CCAR2-dependent manner by sequestering CCAR2 to the cytoplasm, thereby impairing its ability to inhibit SIRT1 which is involved in the deacetylation and negative regulation of beta-catenin (CTNB1) transcriptional activity. The sequence is that of Colorectal mutant cancer protein (MCC) from Homo sapiens (Human).